Here is a 208-residue protein sequence, read N- to C-terminus: Translation initiation factor IF-3 (208 aa).

It belongs to the IF-3 family. In terms of assembly, monomer.

Its subcellular location is the cytoplasm. Its function is as follows. IF-3 binds to the 30S ribosomal subunit and shifts the equilibrium between 70S ribosomes and their 50S and 30S subunits in favor of the free subunits, thus enhancing the availability of 30S subunits on which protein synthesis initiation begins. In Parabacteroides distasonis (strain ATCC 8503 / DSM 20701 / CIP 104284 / JCM 5825 / NCTC 11152), this protein is Translation initiation factor IF-3.